The following is a 421-amino-acid chain: Serine--tRNA ligase (421 aa).

227-229 (TSE) serves as a coordination point for L-serine. ATP is bound by residues 257 to 259 (RRE) and Val-273. Glu-280 contributes to the L-serine binding site. Residue 344-347 (ELTS) coordinates ATP. Thr-379 provides a ligand contact to L-serine.

Belongs to the class-II aminoacyl-tRNA synthetase family. Type-1 seryl-tRNA synthetase subfamily. As to quaternary structure, homodimer. The tRNA molecule binds across the dimer.

Its subcellular location is the cytoplasm. The catalysed reaction is tRNA(Ser) + L-serine + ATP = L-seryl-tRNA(Ser) + AMP + diphosphate + H(+). It catalyses the reaction tRNA(Sec) + L-serine + ATP = L-seryl-tRNA(Sec) + AMP + diphosphate + H(+). It participates in aminoacyl-tRNA biosynthesis; selenocysteinyl-tRNA(Sec) biosynthesis; L-seryl-tRNA(Sec) from L-serine and tRNA(Sec): step 1/1. Its function is as follows. Catalyzes the attachment of serine to tRNA(Ser). Is also able to aminoacylate tRNA(Sec) with serine, to form the misacylated tRNA L-seryl-tRNA(Sec), which will be further converted into selenocysteinyl-tRNA(Sec). The sequence is that of Serine--tRNA ligase from Leifsonia xyli subsp. xyli (strain CTCB07).